We begin with the raw amino-acid sequence, 347 residues long: DNA-directed RNA polymerase subunit alpha (347 aa).

The segment at 1-230 (MFKGFQKPKR…DHMTIFINFE (230 aa)) is alpha N-terminal domain (alpha-NTD). The segment at 247–347 (MNEVLNRSVE…EDDGQDQIGE (101 aa)) is alpha C-terminal domain (alpha-CTD). A disordered region spans residues 320-347 (GRLVAPPPSAGGGPDFGPEDDGQDQIGE). The span at 336 to 347 (GPEDDGQDQIGE) shows a compositional bias: acidic residues.

It belongs to the RNA polymerase alpha chain family. Homodimer. The RNAP catalytic core consists of 2 alpha, 1 beta, 1 beta' and 1 omega subunit. When a sigma factor is associated with the core the holoenzyme is formed, which can initiate transcription.

It catalyses the reaction RNA(n) + a ribonucleoside 5'-triphosphate = RNA(n+1) + diphosphate. Functionally, DNA-dependent RNA polymerase catalyzes the transcription of DNA into RNA using the four ribonucleoside triphosphates as substrates. The protein is DNA-directed RNA polymerase subunit alpha of Solibacter usitatus (strain Ellin6076).